A 394-amino-acid polypeptide reads, in one-letter code: Elongation factor Tu-A (394 aa).

One can recognise a tr-type G domain in the interval 10–204 (KPHVNVGTIG…HLDTYIPEPQ (195 aa)). Residues 19–26 (GHVDHGKT) are G1. 19-26 (GHVDHGKT) provides a ligand contact to GTP. Residue threonine 26 coordinates Mg(2+). The tract at residues 60-64 (GITIN) is G2. The G3 stretch occupies residues 81 to 84 (DCPG). Residues 81 to 85 (DCPGH) and 136 to 139 (NKCD) each bind GTP. The segment at 136-139 (NKCD) is G4. The tract at residues 174-176 (SAL) is G5.

Belongs to the TRAFAC class translation factor GTPase superfamily. Classic translation factor GTPase family. EF-Tu/EF-1A subfamily. As to quaternary structure, monomer.

Its subcellular location is the cytoplasm. It catalyses the reaction GTP + H2O = GDP + phosphate + H(+). Its function is as follows. GTP hydrolase that promotes the GTP-dependent binding of aminoacyl-tRNA to the A-site of ribosomes during protein biosynthesis. This Pasteurella multocida (strain Pm70) protein is Elongation factor Tu-A.